The sequence spans 715 residues: Fatty acid oxidation complex subunit alpha (715 aa).

Residues 1–190 form an enoyl-CoA hydratase region; it reads MTTTSAFMLN…KAGLVDDVVP (190 aa). The segment at 306 to 715 is 3-hydroxyacyl-CoA dehydrogenase; the sequence is GPLNSVGILG…WTNGETDQGN (410 aa).

It in the N-terminal section; belongs to the enoyl-CoA hydratase/isomerase family. The protein in the central section; belongs to the 3-hydroxyacyl-CoA dehydrogenase family. In terms of assembly, heterotetramer of two alpha chains (FadJ) and two beta chains (FadI).

The protein resides in the cytoplasm. It catalyses the reaction a (3S)-3-hydroxyacyl-CoA = a (2E)-enoyl-CoA + H2O. The enzyme catalyses a 4-saturated-(3S)-3-hydroxyacyl-CoA = a (3E)-enoyl-CoA + H2O. It carries out the reaction a (3S)-3-hydroxyacyl-CoA + NAD(+) = a 3-oxoacyl-CoA + NADH + H(+). The catalysed reaction is (3S)-3-hydroxybutanoyl-CoA = (3R)-3-hydroxybutanoyl-CoA. It participates in lipid metabolism; fatty acid beta-oxidation. Functionally, catalyzes the formation of a hydroxyacyl-CoA by addition of water on enoyl-CoA. Also exhibits 3-hydroxyacyl-CoA epimerase and 3-hydroxyacyl-CoA dehydrogenase activities. The protein is Fatty acid oxidation complex subunit alpha of Salmonella paratyphi B (strain ATCC BAA-1250 / SPB7).